Consider the following 237-residue polypeptide: MSSVVYKRVVLKISGEALAGDKEFGIDFNVVNRIADEIKEVRDLGVQIGLVVGGGNIWRGRDAVGMDRTTADHMGMLATVINALALQDALEQRGVPTRVQTAIEMRAIAEPYIRRRAIRHLEKGRVVIFAAGTGNPFFSTDTAASLRAAEIDAEVILLAKKVDGVYDKDPLKHKDAVKFKELSYLDVLNKGLGVMDSTATSLCMDNKIPIIVFDLTTYGNIKKVVMGNDIGTIVKEG.

12–15 is a binding site for ATP; that stretch reads KISG. Position 54 (glycine 54) interacts with UMP. The ATP site is built by glycine 55 and arginine 59. UMP contacts are provided by residues aspartate 72 and 133 to 140; that span reads TGNPFFST. ATP contacts are provided by tyrosine 166 and aspartate 169.

This sequence belongs to the UMP kinase family. Homohexamer.

Its subcellular location is the cytoplasm. The catalysed reaction is UMP + ATP = UDP + ADP. Its pathway is pyrimidine metabolism; CTP biosynthesis via de novo pathway; UDP from UMP (UMPK route): step 1/1. Its activity is regulated as follows. Inhibited by UTP. Functionally, catalyzes the reversible phosphorylation of UMP to UDP. The polypeptide is Uridylate kinase (Caldanaerobacter subterraneus subsp. tengcongensis (strain DSM 15242 / JCM 11007 / NBRC 100824 / MB4) (Thermoanaerobacter tengcongensis)).